A 59-amino-acid chain; its full sequence is Large ribosomal subunit protein uL30 (59 aa).

It belongs to the universal ribosomal protein uL30 family. Part of the 50S ribosomal subunit.

This chain is Large ribosomal subunit protein uL30, found in Lactococcus lactis subsp. lactis (strain IL1403) (Streptococcus lactis).